The following is a 254-amino-acid chain: Enolase-phosphatase E1 (254 aa).

The Mg(2+) site is built by aspartate 13 and glutamate 15. Substrate-binding positions include 127–128 (SS) and lysine 173. Residue aspartate 200 coordinates Mg(2+).

This sequence belongs to the HAD-like hydrolase superfamily. MasA/MtnC family. In terms of assembly, monomer. Mg(2+) is required as a cofactor.

It is found in the cytoplasm. The protein localises to the nucleus. The catalysed reaction is 5-methylsulfanyl-2,3-dioxopentyl phosphate + H2O = 1,2-dihydroxy-5-(methylsulfanyl)pent-1-en-3-one + phosphate. It functions in the pathway amino-acid biosynthesis; L-methionine biosynthesis via salvage pathway; L-methionine from S-methyl-5-thio-alpha-D-ribose 1-phosphate: step 3/6. Its pathway is amino-acid biosynthesis; L-methionine biosynthesis via salvage pathway; L-methionine from S-methyl-5-thio-alpha-D-ribose 1-phosphate: step 4/6. Functionally, bifunctional enzyme that catalyzes the enolization of 2,3-diketo-5-methylthiopentyl-1-phosphate (DK-MTP-1-P) into the intermediate 2-hydroxy-3-keto-5-methylthiopentenyl-1-phosphate (HK-MTPenyl-1-P), which is then dephosphorylated to form the acireductone 1,2-dihydroxy-3-keto-5-methylthiopentene (DHK-MTPene). This Sclerotinia sclerotiorum (strain ATCC 18683 / 1980 / Ss-1) (White mold) protein is Enolase-phosphatase E1 (utr4).